Reading from the N-terminus, the 297-residue chain is Tyrosine recombinase XerD (297 aa).

The region spanning 1–86 (MKDSALIELF…AMRKLFQYLY (86 aa)) is the Core-binding (CB) domain. A Tyr recombinase domain is found at 107-291 (RLPKYLTEQQ…AKERLKHLHE (185 aa)). Catalysis depends on residues Arg-147, Lys-171, His-243, Arg-246, and His-269. Tyr-278 functions as the O-(3'-phospho-DNA)-tyrosine intermediate in the catalytic mechanism.

The protein belongs to the 'phage' integrase family. XerD subfamily. As to quaternary structure, forms a cyclic heterotetrameric complex composed of two molecules of XerC and two molecules of XerD.

The protein localises to the cytoplasm. Its function is as follows. Site-specific tyrosine recombinase, which acts by catalyzing the cutting and rejoining of the recombining DNA molecules. The XerC-XerD complex is essential to convert dimers of the bacterial chromosome into monomers to permit their segregation at cell division. It also contributes to the segregational stability of plasmids. In Pasteurella multocida (strain Pm70), this protein is Tyrosine recombinase XerD.